Here is a 560-residue protein sequence, read N- to C-terminus: MRDLPLTSLALVLSALGALLGTEALRAEEPAVGTSGLIFREDLDWPPGSPQEPLCLVALGGDSNGSSSPLRVVGALSAYEQAFLGAVQRARWGPRDLATFGVCNTGDRQAALPSLRRLGAWLRDPGGQRLVVLHLEEVTWEPTPSLRFQEPPPGGAGPPELALLVLYPGPGPEVTVTRAGLPGAQSLCPSRDTRYLVLAVDRPAGAWRGSGLALTLQPRGEDSRLSTARLQALLFGDDHRCFTRMTPALLLLPRSEPAPLPAHGQLDTVPFPPPRPSAELEESPPSADPFLETLTRLVRALRVPPARASAPRLALDPDALAGFPQGLVNLSDPAALERLLDGEEPLLLLLRPTAATTGDPAPLHDPTSAPWATALARRVAAELQAAAAELRSLPGLPPATAPLLARLLALCPGGPGGLGDPLRALLLLKALQGLRVEWRGRDPRGPGRAQRSAGATAADGPCALRELSVDLRAERSVLIPETYQANNCQGVCGWPQSDRNPRYGNHVVLLLKMQVRGAALARPPCCVPTAYAGKLLISLSEERISAHHVPNMVATECGCR.

The signal sequence occupies residues 1–24; sequence MRDLPLTSLALVLSALGALLGTEA. Positions 25–451 are excised as a propeptide; that stretch reads LRAEEPAVGT…DPRGPGRAQR (427 aa). Residue N64 is glycosylated (N-linked (GlcNAc...) asparagine). The interval 259–287 is disordered; that stretch reads PLPAHGQLDTVPFPPPRPSAELEESPPSA. A glycan (N-linked (GlcNAc...) asparagine) is linked at N329. 3 cysteine pairs are disulfide-bonded: C462/C526, C488/C557, and C492/C559.

The protein belongs to the TGF-beta family. In terms of assembly, homodimer; disulfide-linked. Preproprotein is proteolytically processed to generate N- and C-terminal cleavage products that homodimerize and associate to form a biologically active non-covalent complex. Binding of the non-covalent complex to AMHR2 induces dissociation of the pro-region from the mature C-terminal dimer. The N-terminal portion of the protein, despite having no intrinsic activity, has the role of amplifying the activity of the C-terminus. In ovaries, AMH is detected in granulosa cells of early growing follicles.

The protein resides in the secreted. Its function is as follows. Plays an important role in several reproductive functions. Induces Muellerian duct regression during male fetal sexual differentiation. Also plays a role in Leydig cell differentiation and function. In female acts as a negative regulator of the primordial to primary follicle transition and decreases FSH sensitivity of growing follicles. AMH signals by binding to a specific type-II receptor, AMHR2, that heterodimerizes with type-I receptors (ACVR1 and BMPR1A), and recruiting SMAD proteins that are translocated to the nucleus to regulate target gene expression. The polypeptide is Muellerian-inhibiting factor (Homo sapiens (Human)).